Consider the following 1053-residue polypeptide: MTPKPNTSNPNVGLPLLSKDSPDIESLLILNPKVQSKANAVPSAVTKKNKHNWKRNEEKGCGASCGESKLKNDFRDIKHTTLSERGALKEAMRCLKCADAPCQKSCPTQLDIKSFITSISNKNYYGAARAILSDNPLGLTCGMICPTSDLCVGSCNLQASEEGAINIGGLQQYACDVFKQMNVRQIVSKEVRENRNASHKEQIALIGCGPASISCASFLARLGYTDITIYEKRAYIGGLSSAEIPQFRLPYDVVDFEIQLARDVGVKIETNRSLCKEDITLDKLKSQGAAAVFIGIGNPEPKIDPLFEGLTIENGFYTSKNYLPAVAAASKPGMCGCKRTPLPTMRGRVVVLGAGDTAMDCATSALRCGASRVTIAFRKGFTGIRAVPEEMEAAKEEKCEFLPFSAPRKINVKDGRIVSIEFNKTEQDDNGKWYEDEEQIVILKCDYVISAFGSTLKEDTVLSALQPCKLNKWGGIEVDSTTQQTSEAWVFAGGDVAGVAETTVESVNDGKTLMDLTFKIQIAAWNMHRYIQAKHGNVLGETPELPKFFTPIDEVDISVDMCGVKFENPFGLASAPPTTSGPMCRRAFEQGWGFILTKTYGLDKDLVTNVSPRIVRGSTSGPLYGPNQGSFMNIELISEKSCEYWLQCIRELKRDHPTKIVVASIMCVYNKEDWIELATKSEAAGADILELNLSCPHGMGEKGMGLACGQSPEIVKEICRWVRACVKIPFFPKMTPNITDVREIARAARDGGASGVTATNTVSSLMHMKADGNAWPAIGNTKRTTYGGMSGSAIRPIAMKAVSSIANELDGFPIMATGGIESAETGLGFLMAGASVLQVCSAVQNQDFTVVEDYCTGLKALLYLSGAESLKEWDGQSPPVEKHQKGKPILLQGQKNMPFFGKFRDEREKLEALKLSESNLLDTDNYHFASRPDTQVARVPTVEDVIEHEVAIIDHDMCINCGKCYMTCNDSGYQAITFDAVTHQPHVTEDDCTGCTLCYSVCPIPECIQMVPRKGPWKAPKRGVKPTVEPGTPKVVKVDQRGRVILESTGGMQ.

Residues 84 to 115 enclose the 4Fe-4S ferredoxin-type 1 domain; that stretch reads ERGALKEAMRCLKCADAPCQKSCPTQLDIKSF. The [4Fe-4S] cluster site is built by Cys-94, Cys-97, Cys-102, Cys-106, Cys-145, Cys-151, Cys-155, and Gln-171. Residues 207–211, 231–239, Arg-248, and Leu-274 contribute to the FAD site; these read GCGPA and EKRAYIGGL. Residues 354–357, 378–379, Arg-385, 451–453, and 495–501 contribute to the NADP(+) site; these read AGDT, RK, AFG, and DVAGVAE. 494-503 is a binding site for FAD; the sequence is GDVAGVAETT. Residues Ser-574 and 598–599 contribute to the FMN site; that span reads KT. Substrate contacts are provided by residues Asn-633 and 692–694; that span reads NLS. Cys-695 serves as the catalytic Proton acceptor. Lys-733 is a binding site for FMN. Substrate is bound at residue 760 to 761; it reads NT. FMN is bound by residues Gly-791, 817 to 819, and 840 to 841; these read TGG and CS. 4Fe-4S ferredoxin-type domains are found at residues 949 to 981 and 983 to 1013; these read EVAIIDHDMCINCGKCYMTCNDSGYQAITFDAV and HQPHVTEDDCTGCTLCYSVCPIPECIQMVPR. [4Fe-4S] cluster contacts are provided by Cys-958, Cys-961, Cys-964, Cys-968, Cys-992, Cys-995, Cys-998, and Cys-1002.

This sequence belongs to the dihydropyrimidine dehydrogenase family. [4Fe-4S] cluster is required as a cofactor. Requires FAD as cofactor. It depends on FMN as a cofactor.

It carries out the reaction 5,6-dihydrouracil + NADP(+) = uracil + NADPH + H(+). It functions in the pathway amino-acid biosynthesis; beta-alanine biosynthesis. Involved in pyrimidine base degradation. Catalyzes the reduction of uracil and thymine. Also involved the degradation of the chemotherapeutic drug 5-fluorouracil. The sequence is that of Probable dihydropyrimidine dehydrogenase [NADP(+)] from Caenorhabditis briggsae.